The following is a 344-amino-acid chain: MPVPPLPLHVPAVGWSPDLRALRILDQRLLPGAQEVRDLVQLEEIVEAIRTLAVRGAPAIGVAAAIGLVVALEVDSGGQETRARALLADYAARLQRARPTAVNLGWAIDRLVRTAHRTAVGSMLAALRAEAEAIRAEDVAMCEAIGQHGLAVVPDGARVLTHCNAGALATAGIGTALAPLYMAHARGRALTVYADETRPLRQGARLTAWELSRAGISVSVLPDGAAASLLSQGLVDLVIVGADRIAANGDVANKVGTYGVALAAAAHHVPFYVAAPGSTIDPHTATGRDIVIEHRDADELGELPPGVPAWNPAFDVTPRALIRGYITDRGFVEPPFTLADYAGR.

Residues 55-57 (RGA), R98, and Q202 each bind substrate. The Proton donor role is filled by D243. 253–254 (NK) contacts substrate.

Belongs to the eIF-2B alpha/beta/delta subunits family. MtnA subfamily.

The catalysed reaction is 5-(methylsulfanyl)-alpha-D-ribose 1-phosphate = 5-(methylsulfanyl)-D-ribulose 1-phosphate. The protein operates within amino-acid biosynthesis; L-methionine biosynthesis via salvage pathway; L-methionine from S-methyl-5-thio-alpha-D-ribose 1-phosphate: step 1/6. Its function is as follows. Catalyzes the interconversion of methylthioribose-1-phosphate (MTR-1-P) into methylthioribulose-1-phosphate (MTRu-1-P). The protein is Methylthioribose-1-phosphate isomerase of Gemmatimonas aurantiaca (strain DSM 14586 / JCM 11422 / NBRC 100505 / T-27).